The following is a 543-amino-acid chain: RuBisCO large subunit-binding protein subunit alpha, chloroplastic (543 aa).

A chloroplast-targeting transit peptide spans 1-2 (GA).

It belongs to the chaperonin (HSP60) family. In terms of assembly, oligomer of probably six alpha and six beta subunits.

The protein localises to the plastid. The protein resides in the chloroplast. Its function is as follows. This protein binds RuBisCO small and large subunits and is implicated in the assembly of the enzyme oligomer. The polypeptide is RuBisCO large subunit-binding protein subunit alpha, chloroplastic (Triticum aestivum (Wheat)).